Consider the following 272-residue polypeptide: Shikimate dehydrogenase (NADP(+)) (272 aa).

Shikimate contacts are provided by residues 14 to 16 (SKS) and T61. K65 (proton acceptor) is an active-site residue. E77 contacts NADP(+). Residues N86 and D102 each contribute to the shikimate site. NADP(+) is bound by residues 126 to 130 (GAGGA), 149 to 154 (NRTVSR), and M213. Y215 serves as a coordination point for shikimate. NADP(+) is bound at residue G237.

The protein belongs to the shikimate dehydrogenase family. In terms of assembly, homodimer.

The enzyme catalyses shikimate + NADP(+) = 3-dehydroshikimate + NADPH + H(+). It participates in metabolic intermediate biosynthesis; chorismate biosynthesis; chorismate from D-erythrose 4-phosphate and phosphoenolpyruvate: step 4/7. Functionally, involved in the biosynthesis of the chorismate, which leads to the biosynthesis of aromatic amino acids. Catalyzes the reversible NADPH linked reduction of 3-dehydroshikimate (DHSA) to yield shikimate (SA). This is Shikimate dehydrogenase (NADP(+)) from Escherichia coli O81 (strain ED1a).